A 94-amino-acid chain; its full sequence is Defensin-like protein 21 (94 aa).

The first 26 residues, M1–G26, serve as a signal peptide directing secretion. Cystine bridges form between C41–C92, C51–C79, C65–C88, and C69–C90.

This sequence belongs to the DEFL family.

The protein resides in the secreted. The polypeptide is Defensin-like protein 21 (Arabidopsis thaliana (Mouse-ear cress)).